Consider the following 220-residue polypeptide: Inner membrane-spanning protein YciB (220 aa).

A run of 6 helical transmembrane segments spans residues 20–40, 57–77, 86–106, 123–143, 156–176, and 187–207; these read EVPPLLKLALELGPLLVFFFA, IGAPIFLATALFMAATVIALA, LPIMPLVSGIVVLVFGALTLW, LFGGILLGGLFFGKSLLGYVF, KLTLRWALFFIFLAIVNEIVW, and FKVWGIMPITIVFTLLQMPLI.

Belongs to the YciB family.

Its subcellular location is the cell inner membrane. Plays a role in cell envelope biogenesis, maintenance of cell envelope integrity and membrane homeostasis. The chain is Inner membrane-spanning protein YciB from Brucella melitensis biotype 2 (strain ATCC 23457).